Reading from the N-terminus, the 335-residue chain is Methylthioribose-1-phosphate isomerase (335 aa).

Substrate contacts are provided by residues Arg-47 to Ala-49, Arg-81, and Gln-184. Asp-225 (proton donor) is an active-site residue. Residue Asn-235 to Lys-236 coordinates substrate.

The protein belongs to the eIF-2B alpha/beta/delta subunits family. MtnA subfamily.

The catalysed reaction is 5-(methylsulfanyl)-alpha-D-ribose 1-phosphate = 5-(methylsulfanyl)-D-ribulose 1-phosphate. Its pathway is amino-acid biosynthesis; L-methionine biosynthesis via salvage pathway; L-methionine from S-methyl-5-thio-alpha-D-ribose 1-phosphate: step 1/6. In terms of biological role, catalyzes the interconversion of methylthioribose-1-phosphate (MTR-1-P) into methylthioribulose-1-phosphate (MTRu-1-P). The chain is Methylthioribose-1-phosphate isomerase from Synechococcus sp. (strain CC9902).